We begin with the raw amino-acid sequence, 208 residues long: Na(+)-translocating NADH-quinone reductase subunit D (208 aa).

The next 5 membrane-spanning stretches (helical) occupy residues 42–62 (IVMG…ISLV), 72–92 (IIVQ…LLQA), 103–123 (VFVG…AFAM), 131–151 (LIDG…VATV), and 178–198 (NGLF…IWGL).

Belongs to the NqrDE/RnfAE family. As to quaternary structure, composed of six subunits; NqrA, NqrB, NqrC, NqrD, NqrE and NqrF.

It localises to the cell inner membrane. The enzyme catalyses a ubiquinone + n Na(+)(in) + NADH + H(+) = a ubiquinol + n Na(+)(out) + NAD(+). NQR complex catalyzes the reduction of ubiquinone-1 to ubiquinol by two successive reactions, coupled with the transport of Na(+) ions from the cytoplasm to the periplasm. NqrA to NqrE are probably involved in the second step, the conversion of ubisemiquinone to ubiquinol. In Neisseria meningitidis serogroup B (strain ATCC BAA-335 / MC58), this protein is Na(+)-translocating NADH-quinone reductase subunit D.